The following is a 273-amino-acid chain: Putative phosphoenolpyruvate synthase regulatory protein (273 aa).

Position 154-161 (154-161 (GVSRSGKT)) interacts with ADP.

The protein belongs to the pyruvate, phosphate/water dikinase regulatory protein family. PSRP subfamily.

It carries out the reaction [pyruvate, water dikinase] + ADP = [pyruvate, water dikinase]-phosphate + AMP + H(+). It catalyses the reaction [pyruvate, water dikinase]-phosphate + phosphate + H(+) = [pyruvate, water dikinase] + diphosphate. Bifunctional serine/threonine kinase and phosphorylase involved in the regulation of the phosphoenolpyruvate synthase (PEPS) by catalyzing its phosphorylation/dephosphorylation. The chain is Putative phosphoenolpyruvate synthase regulatory protein from Neisseria meningitidis serogroup C (strain 053442).